Consider the following 862-residue polypeptide: Aldehyde-alcohol dehydrogenase (862 aa).

Residue cysteine 244 is part of the active site. 420–425 (GFWGGN) provides a ligand contact to NAD(+).

It in the N-terminal section; belongs to the aldehyde dehydrogenase family. This sequence in the C-terminal section; belongs to the iron-containing alcohol dehydrogenase family.

It carries out the reaction a primary alcohol + NAD(+) = an aldehyde + NADH + H(+). The enzyme catalyses a secondary alcohol + NAD(+) = a ketone + NADH + H(+). It catalyses the reaction an aldehyde + NAD(+) + H2O = a carboxylate + NADH + 2 H(+). In terms of biological role, has both aldehyde and alcohol dehydrogenase activities. Can use acetaldehyde, butyraldehyde, butanol and ethanol. This Clostridium acetobutylicum (strain ATCC 824 / DSM 792 / JCM 1419 / IAM 19013 / LMG 5710 / NBRC 13948 / NRRL B-527 / VKM B-1787 / 2291 / W) protein is Aldehyde-alcohol dehydrogenase.